The chain runs to 618 residues: 1-deoxy-D-xylulose-5-phosphate synthase (618 aa).

Thiamine diphosphate is bound by residues His72 and 113 to 115 (GHA). Mg(2+) is bound at residue Asp144. Thiamine diphosphate contacts are provided by residues 145 to 146 (GA), Asn173, His284, and Glu359. Mg(2+) is bound at residue Asn173.

This sequence belongs to the transketolase family. DXPS subfamily. Homodimer. Requires Mg(2+) as cofactor. Thiamine diphosphate serves as cofactor.

The enzyme catalyses D-glyceraldehyde 3-phosphate + pyruvate + H(+) = 1-deoxy-D-xylulose 5-phosphate + CO2. It participates in metabolic intermediate biosynthesis; 1-deoxy-D-xylulose 5-phosphate biosynthesis; 1-deoxy-D-xylulose 5-phosphate from D-glyceraldehyde 3-phosphate and pyruvate: step 1/1. Functionally, catalyzes the acyloin condensation reaction between C atoms 2 and 3 of pyruvate and glyceraldehyde 3-phosphate to yield 1-deoxy-D-xylulose-5-phosphate (DXP). In Dictyoglomus thermophilum (strain ATCC 35947 / DSM 3960 / H-6-12), this protein is 1-deoxy-D-xylulose-5-phosphate synthase.